Reading from the N-terminus, the 237-residue chain is MAKRIISQNRGRGSPTYRAPSHKYKAELKHPRVDEESTLNGTVIGIEHDPARSAPIAMVAFENGKKQFIVVPEGISVGEKLSCGVSAEVKPGNTLPLAEIPEGIPICNIESKPNDGGQYARSSGVYATLVSRELSKVVVRMPSGVLKWFHPKCRATIGIVAGGGRVDRPFLKAGKKYHKMKARAAKYPRVSGIAMNVVDHPFGGGNRKHPGKPTTVSRNAPPGRKVGHIAARRTGKR.

Positions Phe202–Arg237 are disordered. Residues Lys225–Arg237 are compositionally biased toward basic residues.

It belongs to the universal ribosomal protein uL2 family. As to quaternary structure, part of the 50S ribosomal subunit. Forms a bridge to the 30S subunit in the 70S ribosome.

Its function is as follows. One of the primary rRNA binding proteins. Required for association of the 30S and 50S subunits to form the 70S ribosome, for tRNA binding and peptide bond formation. It has been suggested to have peptidyltransferase activity; this is somewhat controversial. Makes several contacts with the 16S rRNA in the 70S ribosome. The polypeptide is Large ribosomal subunit protein uL2 (Methanococcoides burtonii (strain DSM 6242 / NBRC 107633 / OCM 468 / ACE-M)).